A 357-amino-acid chain; its full sequence is Sorbitol dehydrogenase (357 aa).

Ala2 is modified (N-acetylalanine). Cys45 serves as a coordination point for Zn(2+). A substrate-binding site is contributed by Tyr51. Positions 70 and 71 each coordinate Zn(2+). Glu156 contributes to the substrate binding site. Positions 184, 204, and 209 each coordinate NAD(+). Ser211 and Ser225 each carry phosphoserine. NAD(+)-binding positions include 273-275 and 297-299; these read VGL and VFR. Residues Arg299 and Tyr300 each contribute to the substrate site.

The protein belongs to the zinc-containing alcohol dehydrogenase family. As to quaternary structure, homotetramer. The cofactor is Zn(2+). As to expression, expressed in liver. Expressed in kidney and epithelial cells of both benign and malignant prostate tissue. Expressed in epididymis (at protein level).

The protein resides in the mitochondrion membrane. It is found in the cell projection. The protein localises to the cilium. It localises to the flagellum. It carries out the reaction keto-D-fructose + NADH + H(+) = D-sorbitol + NAD(+). It catalyses the reaction L-threitol + NAD(+) = L-erythrulose + NADH + H(+). The catalysed reaction is xylitol + NAD(+) = D-xylulose + NADH + H(+). The enzyme catalyses ribitol + NAD(+) = D-ribulose + NADH + H(+). It carries out the reaction (R,R)-butane-2,3-diol + NAD(+) = (R)-acetoin + NADH + H(+). It catalyses the reaction L-iditol + NAD(+) = keto-L-sorbose + NADH + H(+). Its activity is regulated as follows. Inhibited by CP-166,572, an inhibitor that is competitive with fructose. Also competitively inhibited by phenanthroline and 4-methylpyrazole in vitro. Polyol dehydrogenase that catalyzes the reversible NAD(+)-dependent oxidation of various sugar alcohols. Is mostly active with D-sorbitol (D-glucitol), L-threitol, xylitol and ribitol as substrates, leading to the C2-oxidized products D-fructose, L-erythrulose, D-xylulose, and D-ribulose, respectively. Is a key enzyme in the polyol pathway that interconverts glucose and fructose via sorbitol, which constitutes an important alternate route for glucose metabolism. The polyol pathway is believed to be involved in the etiology of diabetic complications, such as diabetic neuropathy and retinopathy, induced by hyperglycemia. May play a role in sperm motility by using sorbitol as an alternative energy source for sperm motility. May have a more general function in the metabolism of secondary alcohols since it also catalyzes the stereospecific oxidation of (2R,3R)-2,3-butanediol. To a lesser extent, can also oxidize L-arabinitol, galactitol and D-mannitol and glycerol in vitro. Oxidizes neither ethanol nor other primary alcohols. Cannot use NADP(+) as the electron acceptor. This is Sorbitol dehydrogenase (SORD) from Homo sapiens (Human).